A 120-amino-acid polypeptide reads, in one-letter code: Aspartate 1-decarboxylase (120 aa).

Serine 25 (schiff-base intermediate with substrate; via pyruvic acid) is an active-site residue. Serine 25 carries the pyruvic acid (Ser) modification. Threonine 57 contacts substrate. The active-site Proton donor is the tyrosine 58. Residue glycine 73 to alanine 75 coordinates substrate.

It belongs to the PanD family. As to quaternary structure, heterooctamer of four alpha and four beta subunits. Pyruvate is required as a cofactor. In terms of processing, is synthesized initially as an inactive proenzyme, which is activated by self-cleavage at a specific serine bond to produce a beta-subunit with a hydroxyl group at its C-terminus and an alpha-subunit with a pyruvoyl group at its N-terminus.

The protein localises to the cytoplasm. It carries out the reaction L-aspartate + H(+) = beta-alanine + CO2. It participates in cofactor biosynthesis; (R)-pantothenate biosynthesis; beta-alanine from L-aspartate: step 1/1. In terms of biological role, catalyzes the pyruvoyl-dependent decarboxylation of aspartate to produce beta-alanine. The chain is Aspartate 1-decarboxylase from Ralstonia pickettii (strain 12J).